We begin with the raw amino-acid sequence, 717 residues long: MEELDRSRAFARDVKRIVVKVGTAVVTGKGGRLALGRLGALCEQLAELNSDGFEVILVSSGAVGLGRQRLRYRQLVNSSFADLQKPQTELDGKACAGVGQSSLMAYYETMFDQLDVTAAQLLVNDSSFRDKDFRKQLNETVKSMLDLRVIPIFNENDAISTRRAPYQDSSGIFWDNDSLAALLALELKADLLILLSDVEGLYTGPPSDPNSKLIHTFVKEKHQDEITFGDKSRLGRGGMTAKVKAAVNAAYAGIPVIITSGYSAENIDKVLRGLRVGTLFHQDARLWAPITDSNARDMAVAARESSRKLQALSSEDRKKILLDIADALEANVTTIKAENELDVASAQEAGLEESMVARLVMTPGKISSLAASVRKLADMEDPIGRVLKKTEVADGLVLEKTSSPLGVLLIVFESRPDALVQIASLAIRSGNGLLLKGGKEARRSNAILHKVITDAIPETVGGKLIGLVTSREEIPDLLKLDDVIDLVIPRGSNKLVTQIKNTTKIPVLGHADGICHVYVDKACDTDMAKRIVSDAKLDYPAACNAMETLLVHKDLEQNAVLNELIFALQSNGVTLYGGPRASKILNIPEARSFNHEYCAKACTVEVVEDVYGAIDHIHRHGSAHTDCIVTEDHEVAELFLRQVDSAAVFHNASTRFSDGFRFGLGAEVGVSTGRIHARGPVGVEGLLTTRWIMRGKGQVVDGDNGIVYTHQDIPIQA.

The tract at residues 1–296 (MEELDRSRAF…WAPITDSNAR (296 aa)) is glutamate 5-kinase. Substrate contacts are provided by serine 60, aspartate 157, and asparagine 176. ATP-binding positions include 196–197 (SD) and 236–242 (RGGMTAK). Positions 297 to 717 (DMAVAARESS…YTHQDIPIQA (421 aa)) are gamma-glutamyl phosphate reductase.

This sequence in the N-terminal section; belongs to the glutamate 5-kinase family. It in the C-terminal section; belongs to the gamma-glutamyl phosphate reductase family.

It carries out the reaction L-glutamate + ATP = L-glutamyl 5-phosphate + ADP. The catalysed reaction is L-glutamate 5-semialdehyde + phosphate + NADP(+) = L-glutamyl 5-phosphate + NADPH + H(+). It functions in the pathway amino-acid biosynthesis; L-proline biosynthesis; L-glutamate 5-semialdehyde from L-glutamate: step 1/2. The protein operates within amino-acid biosynthesis; L-proline biosynthesis; L-glutamate 5-semialdehyde from L-glutamate: step 2/2. P5CS plays a key role in proline biosynthesis, leading to osmoregulation in plants. The polypeptide is Delta-1-pyrroline-5-carboxylate synthase A (P5CSA) (Arabidopsis thaliana (Mouse-ear cress)).